The chain runs to 82 residues: Small ribosomal subunit protein bS16 (82 aa).

It belongs to the bacterial ribosomal protein bS16 family.

The chain is Small ribosomal subunit protein bS16 from Klebsiella pneumoniae (strain 342).